The sequence spans 225 residues: Transmembrane emp24 domain-containing protein p24delta11 (225 aa).

The signal sequence occupies residues 1–35; that stretch reads MDLLPSRYKIHKTKLRWILTMMTMMMMMVMRRGES. Residues 36-193 lie on the Lumenal side of the membrane; it reads MRLDMESGNT…ELNRSTNSRM (158 aa). A GOLD domain is found at 45 to 160; that stretch reads TKCISDDIKT…ITMLEVEVRK (116 aa). Residues 175–188 adopt a coiled-coil conformation; the sequence is LIEREREMQELNRS. R178 is modified (omega-N-methylated arginine). Residue N186 is glycosylated (N-linked (GlcNAc...) asparagine). The helical transmembrane segment at 194–210 threads the bilayer; that stretch reads AALSLLSFVVTMSVAGL. Residues 211–225 lie on the Cytoplasmic side of the membrane; it reads QLRHLKSFLERKKLL. The COPII vesicle coat-binding motif lies at 218–219; sequence FL. Positions 218–225 match the COPI vesicle coat-binding motif; that stretch reads FLERKKLL.

This sequence belongs to the EMP24/GP25L family. In terms of assembly, probably oligomerizes with other members of the EMP24/GP25L family. Associates with the COPI vesicle coat (coatomer). Associates with the COPII vesicle coat (coatomer).

It localises to the endoplasmic reticulum membrane. The protein resides in the golgi apparatus. The protein localises to the cis-Golgi network membrane. Its subcellular location is the golgi stack membrane. In terms of biological role, involved in vesicular protein trafficking. Mainly functions in the early secretory pathway. Thought to act as cargo receptor at the lumenal side for incorporation of secretory cargo molecules into transport vesicles and to be involved in vesicle coat formation at the cytoplasmic side. In Arabidopsis thaliana (Mouse-ear cress), this protein is Transmembrane emp24 domain-containing protein p24delta11.